Reading from the N-terminus, the 438-residue chain is Methionine aminopeptidase 2 (438 aa).

Residues 1–89 (MAAQAAPAEE…LFPNKQYPKG (89 aa)) are disordered. Residues 10 to 20 (ELSKLSVEETK) are compositionally biased toward basic and acidic residues. The span at 51 to 65 (AKKKKKRKPRKKKKA) shows a compositional bias: basic residues. His-191 contacts substrate. Residues Asp-211, Asp-222, and His-291 each contribute to the a divalent metal cation site. His-299 contacts substrate. Glu-324 and Glu-419 together coordinate a divalent metal cation.

The protein belongs to the peptidase M24A family. Methionine aminopeptidase eukaryotic type 2 subfamily. Requires Co(2+) as cofactor. It depends on Zn(2+) as a cofactor. The cofactor is Mn(2+). Fe(2+) serves as cofactor.

The protein resides in the cytoplasm. The catalysed reaction is Release of N-terminal amino acids, preferentially methionine, from peptides and arylamides.. Cotranslationally removes the N-terminal methionine from nascent proteins. The N-terminal methionine is often cleaved when the second residue in the primary sequence is small and uncharged (Met-Ala-, Cys, Gly, Pro, Ser, Thr, or Val). The sequence is that of Methionine aminopeptidase 2 from Sordaria macrospora (strain ATCC MYA-333 / DSM 997 / K(L3346) / K-hell).